A 299-amino-acid polypeptide reads, in one-letter code: Protease HtpX homolog (299 aa).

2 helical membrane-spanning segments follow: residues 7–24 and 29–46; these read GILM…GALI and GAII…FTFW. His-130 is a Zn(2+) binding site. Glu-131 is a catalytic residue. Zn(2+) is bound at residue His-134. Transmembrane regions (helical) follow at residues 145–165 and 174–194; these read VTAT…FFGG and PVGI…AGLV. Glu-203 provides a ligand contact to Zn(2+).

Belongs to the peptidase M48B family. Requires Zn(2+) as cofactor.

The protein resides in the cell inner membrane. In Cereibacter sphaeroides (strain ATCC 17025 / ATH 2.4.3) (Rhodobacter sphaeroides), this protein is Protease HtpX homolog.